Reading from the N-terminus, the 455-residue chain is Bifunctional protein GlmU (455 aa).

The segment at 1-226 (MSLDIVILAA…PMEVQGANDR (226 aa)) is pyrophosphorylase. Residues 8-11 (LAAG), lysine 22, glutamine 73, 78-79 (GT), 99-101 (YGD), glycine 136, glutamate 151, asparagine 166, and asparagine 224 each bind UDP-N-acetyl-alpha-D-glucosamine. A Mg(2+)-binding site is contributed by aspartate 101. Position 224 (asparagine 224) interacts with Mg(2+). The linker stretch occupies residues 227 to 247 (RQLSELERHYQLREGRRLMAQ). The N-acetyltransferase stretch occupies residues 248 to 455 (GVTLRDPARF…WKRPEKTKKS (208 aa)). UDP-N-acetyl-alpha-D-glucosamine contacts are provided by arginine 330 and lysine 348. Histidine 360 (proton acceptor) is an active-site residue. UDP-N-acetyl-alpha-D-glucosamine is bound by residues tyrosine 363 and asparagine 374. Residues alanine 377, 383-384 (NY), serine 402, alanine 420, and arginine 437 contribute to the acetyl-CoA site.

It in the N-terminal section; belongs to the N-acetylglucosamine-1-phosphate uridyltransferase family. In the C-terminal section; belongs to the transferase hexapeptide repeat family. As to quaternary structure, homotrimer. Mg(2+) serves as cofactor.

It localises to the cytoplasm. It catalyses the reaction alpha-D-glucosamine 1-phosphate + acetyl-CoA = N-acetyl-alpha-D-glucosamine 1-phosphate + CoA + H(+). It carries out the reaction N-acetyl-alpha-D-glucosamine 1-phosphate + UTP + H(+) = UDP-N-acetyl-alpha-D-glucosamine + diphosphate. The protein operates within nucleotide-sugar biosynthesis; UDP-N-acetyl-alpha-D-glucosamine biosynthesis; N-acetyl-alpha-D-glucosamine 1-phosphate from alpha-D-glucosamine 6-phosphate (route II): step 2/2. Its pathway is nucleotide-sugar biosynthesis; UDP-N-acetyl-alpha-D-glucosamine biosynthesis; UDP-N-acetyl-alpha-D-glucosamine from N-acetyl-alpha-D-glucosamine 1-phosphate: step 1/1. It participates in bacterial outer membrane biogenesis; LPS lipid A biosynthesis. Its function is as follows. Catalyzes the last two sequential reactions in the de novo biosynthetic pathway for UDP-N-acetylglucosamine (UDP-GlcNAc). The C-terminal domain catalyzes the transfer of acetyl group from acetyl coenzyme A to glucosamine-1-phosphate (GlcN-1-P) to produce N-acetylglucosamine-1-phosphate (GlcNAc-1-P), which is converted into UDP-GlcNAc by the transfer of uridine 5-monophosphate (from uridine 5-triphosphate), a reaction catalyzed by the N-terminal domain. The protein is Bifunctional protein GlmU of Pseudomonas putida (strain GB-1).